A 136-amino-acid chain; its full sequence is Psoriasis susceptibility 1 candidate gene 2 protein homolog (136 aa).

The first 22 residues, 1–22 (MILNWKLLGILVLCLHTRGISG), serve as a signal peptide directing secretion. The interval 20-136 (ISGSEDHPSH…DLDPPREEYR (117 aa)) is disordered. Basic and acidic residues predominate over residues 23–33 (SEDHPSHPPAE). Composition is skewed to pro residues over residues 44-74 (PQGP…PPWR) and 83-116 (PPEP…PPAP). Residues 117-136 (EVDHRPQEEPDLDPPREEYR) show a composition bias toward basic and acidic residues.

The protein localises to the secreted. The chain is Psoriasis susceptibility 1 candidate gene 2 protein homolog (PSORS1C2) from Pan troglodytes (Chimpanzee).